The primary structure comprises 314 residues: Acetyl-coenzyme A carboxylase carboxyl transferase subunit alpha (314 aa).

Positions 38–292 constitute a CoA carboxyltransferase C-terminal domain; the sequence is RLERKSAALL…ANAIDEELDA (255 aa).

It belongs to the AccA family. In terms of assembly, acetyl-CoA carboxylase is a heterohexamer composed of biotin carboxyl carrier protein (AccB), biotin carboxylase (AccC) and two subunits each of ACCase subunit alpha (AccA) and ACCase subunit beta (AccD).

The protein resides in the cytoplasm. The enzyme catalyses N(6)-carboxybiotinyl-L-lysyl-[protein] + acetyl-CoA = N(6)-biotinyl-L-lysyl-[protein] + malonyl-CoA. It functions in the pathway lipid metabolism; malonyl-CoA biosynthesis; malonyl-CoA from acetyl-CoA: step 1/1. Functionally, component of the acetyl coenzyme A carboxylase (ACC) complex. First, biotin carboxylase catalyzes the carboxylation of biotin on its carrier protein (BCCP) and then the CO(2) group is transferred by the carboxyltransferase to acetyl-CoA to form malonyl-CoA. This chain is Acetyl-coenzyme A carboxylase carboxyl transferase subunit alpha, found in Erythrobacter litoralis (strain HTCC2594).